A 223-amino-acid polypeptide reads, in one-letter code: 7-cyano-7-deazaguanine synthase (223 aa).

Residue 15 to 25 coordinates ATP; it reads FSGGQDSTTCL. Zn(2+) is bound by residues cysteine 191, cysteine 200, cysteine 203, and cysteine 206.

It belongs to the QueC family. Homodimer. The cofactor is Zn(2+).

It catalyses the reaction 7-carboxy-7-deazaguanine + NH4(+) + ATP = 7-cyano-7-deazaguanine + ADP + phosphate + H2O + H(+). Its pathway is purine metabolism; 7-cyano-7-deazaguanine biosynthesis. Catalyzes the ATP-dependent conversion of 7-carboxy-7-deazaguanine (CDG) to 7-cyano-7-deazaguanine (preQ(0)). In Staphylococcus epidermidis (strain ATCC 35984 / DSM 28319 / BCRC 17069 / CCUG 31568 / BM 3577 / RP62A), this protein is 7-cyano-7-deazaguanine synthase.